The primary structure comprises 363 residues: Mitogen-activated protein kinase kinase 2 (363 aa).

At serine 56 the chain carries Phosphoserine. Residues 70-330 (LDMVKVIGKG…AKELMEHPFL (261 aa)) form the Protein kinase domain. Residues 76–84 (IGKGSSGVV) and lysine 99 contribute to the ATP site. The Proton acceptor role is filled by aspartate 192. A phosphothreonine mark is found at threonine 220, threonine 226, and threonine 230.

Belongs to the protein kinase superfamily. STE Ser/Thr protein kinase family. MAP kinase kinase subfamily. Interacts with MEKK1, MPK4 and MPK6. May form a ternary complex composed of MEKK1 and MKK1/MKK2 and MPK4. Interacts with MPK10 and MPK11. Interacts with MAPKKK5 mainly in the cytosol. Phosphorylation at Thr-220 and Thr-226 by MAP kinase kinase kinases positively regulates kinase activity. Phosphorylated by MEKK1 in response to cold. Phosphorylated by MAPKKK5.

It carries out the reaction L-seryl-[protein] + ATP = O-phospho-L-seryl-[protein] + ADP + H(+). The enzyme catalyses L-threonyl-[protein] + ATP = O-phospho-L-threonyl-[protein] + ADP + H(+). The catalysed reaction is L-tyrosyl-[protein] + ATP = O-phospho-L-tyrosyl-[protein] + ADP + H(+). With respect to regulation, activated in response to cold and salt stresses through serine and threonine phosphorylation by MEKK1. Functionally, MEKK1, MKK1/MKK2 and MPK4 function in a signaling pathway that modulates the expression of genes responding to biotic and abiotic stresses and also plays an important role in pathogen defense by negatively regulating innate immunity. Plays a role in abiotic stress tolerance and plant disease resistance through activation of MPK4 and MPK6 by phosphorylation. Acts redundantly with MKK1. The protein is Mitogen-activated protein kinase kinase 2 (MKK2) of Arabidopsis thaliana (Mouse-ear cress).